The primary structure comprises 163 residues: Nucleotide-binding protein NTHI1194 (163 aa).

This sequence belongs to the YajQ family.

Nucleotide-binding protein. The sequence is that of Nucleotide-binding protein NTHI1194 from Haemophilus influenzae (strain 86-028NP).